Reading from the N-terminus, the 483-residue chain is UDP-N-acetylmuramoyl-L-alanyl-D-glutamate--2,6-diaminopimelate ligase (483 aa).

Residue serine 30 participates in UDP-N-acetyl-alpha-D-muramoyl-L-alanyl-D-glutamate binding. 109–115 (GTNGKTT) serves as a coordination point for ATP. UDP-N-acetyl-alpha-D-muramoyl-L-alanyl-D-glutamate is bound by residues 151–152 (TT), serine 178, and arginine 186. Lysine 218 carries the N6-carboxylysine modification. Residues arginine 380, 403–406 (DNPR), glycine 453, and glutamate 457 contribute to the meso-2,6-diaminopimelate site. Positions 403–406 (DNPR) match the Meso-diaminopimelate recognition motif motif.

It belongs to the MurCDEF family. MurE subfamily. The cofactor is Mg(2+). In terms of processing, carboxylation is probably crucial for Mg(2+) binding and, consequently, for the gamma-phosphate positioning of ATP.

The protein localises to the cytoplasm. The enzyme catalyses UDP-N-acetyl-alpha-D-muramoyl-L-alanyl-D-glutamate + meso-2,6-diaminopimelate + ATP = UDP-N-acetyl-alpha-D-muramoyl-L-alanyl-gamma-D-glutamyl-meso-2,6-diaminopimelate + ADP + phosphate + H(+). Its pathway is cell wall biogenesis; peptidoglycan biosynthesis. In terms of biological role, catalyzes the addition of meso-diaminopimelic acid to the nucleotide precursor UDP-N-acetylmuramoyl-L-alanyl-D-glutamate (UMAG) in the biosynthesis of bacterial cell-wall peptidoglycan. In Chlamydia trachomatis serovar A (strain ATCC VR-571B / DSM 19440 / HAR-13), this protein is UDP-N-acetylmuramoyl-L-alanyl-D-glutamate--2,6-diaminopimelate ligase.